Consider the following 513-residue polypeptide: Ribonuclease Y (513 aa).

The chain crosses the membrane as a helical span at residues 6–26 (YIIIAVVIIIICVILGLYVVD). Residues 35-59 (EASKEARRLKEEAERDAEAKKKEAI) are disordered. Residues 203–288 (TVHVVNLPND…EMVEKAKKEV (86 aa)) form the KH domain. Residues 329–422 (VLKHSIEVSH…VQAADAISAA (94 aa)) enclose the HD domain.

The protein belongs to the RNase Y family.

It is found in the cell membrane. Its function is as follows. Endoribonuclease that initiates mRNA decay. This is Ribonuclease Y from Clostridium botulinum (strain Okra / Type B1).